Consider the following 107-residue polypeptide: Large ribosomal subunit protein uL24 (107 aa).

Belongs to the universal ribosomal protein uL24 family. In terms of assembly, part of the 50S ribosomal subunit.

Its function is as follows. One of two assembly initiator proteins, it binds directly to the 5'-end of the 23S rRNA, where it nucleates assembly of the 50S subunit. In terms of biological role, one of the proteins that surrounds the polypeptide exit tunnel on the outside of the subunit. The sequence is that of Large ribosomal subunit protein uL24 from Streptomyces griseus subsp. griseus (strain JCM 4626 / CBS 651.72 / NBRC 13350 / KCC S-0626 / ISP 5235).